The chain runs to 855 residues: Leucine--tRNA ligase (855 aa).

The 'HIGH' region signature appears at 42-52; that stretch reads PYPSGSLHVGH. Positions 292 to 311 are disordered; sequence SEMDRTAEDKPKKGIPTGGK. Residues 293–303 show a composition bias toward basic and acidic residues; it reads EMDRTAEDKPK. Residues 614-618 carry the 'KMSKS' region motif; that stretch reads KMSKS. ATP is bound at residue Lys617.

This sequence belongs to the class-I aminoacyl-tRNA synthetase family.

The protein localises to the cytoplasm. It catalyses the reaction tRNA(Leu) + L-leucine + ATP = L-leucyl-tRNA(Leu) + AMP + diphosphate. In Acaryochloris marina (strain MBIC 11017), this protein is Leucine--tRNA ligase.